A 247-amino-acid polypeptide reads, in one-letter code: Carboxy-S-adenosyl-L-methionine synthase (247 aa).

S-adenosyl-L-methionine contacts are provided by residues tyrosine 40, 65-67 (GAS), 90-91 (DN), 122-123 (DI), asparagine 137, and arginine 204.

Belongs to the class I-like SAM-binding methyltransferase superfamily. Cx-SAM synthase family. In terms of assembly, homodimer.

The enzyme catalyses prephenate + S-adenosyl-L-methionine = carboxy-S-adenosyl-L-methionine + 3-phenylpyruvate + H2O. Its function is as follows. Catalyzes the conversion of S-adenosyl-L-methionine (SAM) to carboxy-S-adenosyl-L-methionine (Cx-SAM). This Pseudomonas putida (strain ATCC 47054 / DSM 6125 / CFBP 8728 / NCIMB 11950 / KT2440) protein is Carboxy-S-adenosyl-L-methionine synthase.